Reading from the N-terminus, the 173-residue chain is Crossover junction endodeoxyribonuclease RuvC (173 aa).

Residues aspartate 8, glutamate 67, and aspartate 139 contribute to the active site. The Mg(2+) site is built by aspartate 8, glutamate 67, and aspartate 139.

This sequence belongs to the RuvC family. As to quaternary structure, homodimer which binds Holliday junction (HJ) DNA. The HJ becomes 2-fold symmetrical on binding to RuvC with unstacked arms; it has a different conformation from HJ DNA in complex with RuvA. In the full resolvosome a probable DNA-RuvA(4)-RuvB(12)-RuvC(2) complex forms which resolves the HJ. Mg(2+) serves as cofactor.

It localises to the cytoplasm. It carries out the reaction Endonucleolytic cleavage at a junction such as a reciprocal single-stranded crossover between two homologous DNA duplexes (Holliday junction).. Functionally, the RuvA-RuvB-RuvC complex processes Holliday junction (HJ) DNA during genetic recombination and DNA repair. Endonuclease that resolves HJ intermediates. Cleaves cruciform DNA by making single-stranded nicks across the HJ at symmetrical positions within the homologous arms, yielding a 5'-phosphate and a 3'-hydroxyl group; requires a central core of homology in the junction. The consensus cleavage sequence is 5'-(A/T)TT(C/G)-3'. Cleavage occurs on the 3'-side of the TT dinucleotide at the point of strand exchange. HJ branch migration catalyzed by RuvA-RuvB allows RuvC to scan DNA until it finds its consensus sequence, where it cleaves and resolves the cruciform DNA. This is Crossover junction endodeoxyribonuclease RuvC from Cronobacter sakazakii (strain ATCC BAA-894) (Enterobacter sakazakii).